A 224-amino-acid polypeptide reads, in one-letter code: Ribonuclease 3 (224 aa).

In terms of domain architecture, RNase III spans 4 to 126; the sequence is LDRLQRQISY…IIGAISLDSS (123 aa). Glu39 contacts Mg(2+). Asp43 is a catalytic residue. Residues Asp112 and Glu115 each coordinate Mg(2+). Glu115 is a catalytic residue. The DRBM domain maps to 153-223; it reads DPKTRLQEYL…AEQILTALEI (71 aa).

It belongs to the ribonuclease III family. Homodimer. Mg(2+) is required as a cofactor.

It is found in the cytoplasm. It carries out the reaction Endonucleolytic cleavage to 5'-phosphomonoester.. Functionally, digests double-stranded RNA. Involved in the processing of primary rRNA transcript to yield the immediate precursors to the large and small rRNAs (23S and 16S). Processes some mRNAs, and tRNAs when they are encoded in the rRNA operon. Processes pre-crRNA and tracrRNA of type II CRISPR loci if present in the organism. The polypeptide is Ribonuclease 3 (Mannheimia succiniciproducens (strain KCTC 0769BP / MBEL55E)).